Here is a 1017-residue protein sequence, read N- to C-terminus: Anaphase-promoting complex subunit 5 (1017 aa).

TPR repeat units follow at residues 30-63 (KQSL…EKEL), 182-214 (DMSM…SPLD), 252-286 (VKRV…VNGQ), 337-370 (PYAV…AQER), and 508-541 (NNNN…WNDI). Residues 451 to 525 (INSNNYNSNN…NNNSSNSNNN (75 aa)) show a composition bias toward low complexity. Disordered stretches follow at residues 451-527 (INSN…NNGG) and 617-636 (NNNN…QQQN). 5 TPR repeats span residues 642–675 (LLSF…YKTQ), 756–790 (VICY…SRDF), 838–871 (ADSN…VLSD), 876–908 (SQLY…FLQL), and 931–964 (KEIY…LVPS).

The protein belongs to the APC5 family. As to quaternary structure, the APC/C is composed of at least 13 subunits that stay tightly associated throughout the cell cycle: anapc1, anapc2, anapc3, anapc4, anapc5, anapc6, anapc7, anapc8, anapc10, anapc11, cdc20, cdc26 and cdh1.

The protein resides in the nucleus. Its pathway is protein modification; protein ubiquitination. In terms of biological role, component of the anaphase promoting complex/cyclosome (APC/C), a cell cycle-regulated E3 ubiquitin-protein ligase complex that controls progression through mitosis and the G1 phase of the cell cycle. This is Anaphase-promoting complex subunit 5 (anapc5) from Dictyostelium discoideum (Social amoeba).